The chain runs to 756 residues: 1,4-alpha-glucan branching enzyme GlgB (756 aa).

The active-site Nucleophile is Asp425. The Proton donor role is filled by Glu478.

It belongs to the glycosyl hydrolase 13 family. GlgB subfamily. As to quaternary structure, monomer.

The catalysed reaction is Transfers a segment of a (1-&gt;4)-alpha-D-glucan chain to a primary hydroxy group in a similar glucan chain.. Its pathway is glycan biosynthesis; glycogen biosynthesis. In terms of biological role, catalyzes the formation of the alpha-1,6-glucosidic linkages in glycogen by scission of a 1,4-alpha-linked oligosaccharide from growing alpha-1,4-glucan chains and the subsequent attachment of the oligosaccharide to the alpha-1,6 position. This chain is 1,4-alpha-glucan branching enzyme GlgB, found in Cupriavidus necator (strain ATCC 17699 / DSM 428 / KCTC 22496 / NCIMB 10442 / H16 / Stanier 337) (Ralstonia eutropha).